A 450-amino-acid chain; its full sequence is Hydrolase ffsE (450 aa).

Catalysis depends on Ser266, which acts as the Nucleophile.

Belongs to the AB hydrolase superfamily. FUS2 hydrolase family. Homodimer.

It participates in mycotoxin biosynthesis. Functionally, hydrolase; part of the gene cluster that mediates the biosynthesis of the cytotoxic leucine-containing cytochalasans, including aspochalasin C, aspochalasin E, TMC-169, flavichalasine F, aspergillin PZ, aspochalasin M and flavichalasine G. The first step in the pathway is catalyzed by the hybrid PKS-NRPS ffsA that utilizes 8 units of malonyl-CoA to iteratively assemble the octaketide chain before addition of L-leucine by the C-terminal NRPS modules. Because ffsA lacks a designated enoylreductase (ER) domain, the required activity is provided the enoyl reductase fssC. The methyltransferase (MT) domain of ffsA catalyzes the alpha-methylation at C10 and C14 using S-adenosyl-L-methionine as the methyl-donating cosubstrate. Reduction by the hydrolyase ffsE, followed by dehydration and intra-molecular Diels-Alder cyclization by the Diels-Alderase ffsF then yield the required isoindolone-fused macrocycle. A number of oxidative steps catalyzed by the tailoring cytochrome P450 monooxygenase ffsD, the FAD-linked oxidoreductase ffsJ and the short-chain dehydrogenase/reductase ffsI, are further required to afford the final products. This is Hydrolase ffsE from Aspergillus flavipes.